Reading from the N-terminus, the 229-residue chain is Homeobox-leucine zipper protein HOX3 (229 aa).

Residues 1–82 (MMGATSPSGL…GPHRPKKLRL (82 aa)) are disordered. Over residues 52–68 (GEEEEFPMGSVEEDEEE) the composition is skewed to acidic residues. Residues 75 to 134 (HRPKKLRLSKEQSRLLEESFRLNHTLTPKQKEALAIKLKLRPRQVEVWFQNRRARTKLKQ) constitute a DNA-binding region (homeobox). The tract at residues 133–177 (KQTEMECEYLKRCFGSLTEENRRLQREVEELRAMRVAPPTVLSPH) is leucine-zipper. The tract at residues 198 to 229 (AATGPPAVRPPPSSAAAAAPSPFHPRRPSAAF) is disordered.

The protein belongs to the HD-ZIP homeobox family. Class II subfamily. As to quaternary structure, homodimer. May form a heterodimer with HOX1, HOX2 or HOX7. Expressed in seedlings, roots, leaves, nodes, internodes, flowers and embryo.

The protein localises to the nucleus. Its function is as follows. Probable transcription repressor that binds to the DNA sequence 5'-CAAT[GC]ATTG-3'. The sequence is that of Homeobox-leucine zipper protein HOX3 (HOX3) from Oryza sativa subsp. indica (Rice).